The primary structure comprises 349 residues: Isopentenyl-diphosphate delta-isomerase (349 aa).

Substrate is bound at residue 12 to 13 (RK). Residues 69-71 (GMT), Ser-99, and Asn-128 each bind FMN. Gln-158 contributes to the substrate binding site. Glu-159 contributes to the Mg(2+) binding site. FMN is bound by residues Lys-189, Ser-214, Thr-219, 265–267 (GIR), and 286–287 (SG).

This sequence belongs to the IPP isomerase type 2 family. Homooctamer. Dimer of tetramers. The cofactor is FMN. It depends on NADPH as a cofactor. Mg(2+) serves as cofactor.

It is found in the cytoplasm. The enzyme catalyses isopentenyl diphosphate = dimethylallyl diphosphate. Involved in the biosynthesis of isoprenoids. Catalyzes the 1,3-allylic rearrangement of the homoallylic substrate isopentenyl (IPP) to its allylic isomer, dimethylallyl diphosphate (DMAPP). The protein is Isopentenyl-diphosphate delta-isomerase of Latilactobacillus sakei subsp. sakei (strain 23K) (Lactobacillus sakei subsp. sakei).